The chain runs to 474 residues: Bifunctional protein HldE (474 aa).

Residues 1–318 form a ribokinase region; sequence MKVTLPDFNK…ENAIRGRADN (318 aa). Position 195 to 198 (195 to 198) interacts with ATP; sequence NMSE. Asp264 is a catalytic residue. The cytidylyltransferase stretch occupies residues 344 to 474; sequence MTNGCFDILH…TNIINAIKKK (131 aa).

In the N-terminal section; belongs to the carbohydrate kinase PfkB family. The protein in the C-terminal section; belongs to the cytidylyltransferase family. Homodimer.

The catalysed reaction is D-glycero-beta-D-manno-heptose 7-phosphate + ATP = D-glycero-beta-D-manno-heptose 1,7-bisphosphate + ADP + H(+). It carries out the reaction D-glycero-beta-D-manno-heptose 1-phosphate + ATP + H(+) = ADP-D-glycero-beta-D-manno-heptose + diphosphate. The protein operates within nucleotide-sugar biosynthesis; ADP-L-glycero-beta-D-manno-heptose biosynthesis; ADP-L-glycero-beta-D-manno-heptose from D-glycero-beta-D-manno-heptose 7-phosphate: step 1/4. Its pathway is nucleotide-sugar biosynthesis; ADP-L-glycero-beta-D-manno-heptose biosynthesis; ADP-L-glycero-beta-D-manno-heptose from D-glycero-beta-D-manno-heptose 7-phosphate: step 3/4. Catalyzes the phosphorylation of D-glycero-D-manno-heptose 7-phosphate at the C-1 position to selectively form D-glycero-beta-D-manno-heptose-1,7-bisphosphate. Functionally, catalyzes the ADP transfer from ATP to D-glycero-beta-D-manno-heptose 1-phosphate, yielding ADP-D-glycero-beta-D-manno-heptose. The sequence is that of Bifunctional protein HldE from Proteus mirabilis (strain HI4320).